A 403-amino-acid polypeptide reads, in one-letter code: SH3 and cysteine-rich domain-containing protein (403 aa).

The disordered stretch occupies residues 1–51 (MIPPSGAREDSGDGLTGEATGTEQPPSPASTSSLESKLQKLKRSLSFKTKS). The segment covering 19–36 (ATGTEQPPSPASTSSLES) has biased composition (polar residues). The span at 39-51 (QKLKRSLSFKTKS) shows a compositional bias: basic residues. The Phorbol-ester/DAG-type zinc finger occupies 108-160 (LHAFQEHVFKKPTFCDVCNHMIVGTHAKHGLRCGACKMSIHHKCADGLAPQRC). Residues 212-264 (QRTKKGGSGSGSDSPPRTSTSELVDVPEEADGPGDGSDMRTRSNSVFTYPENG) form a disordered region. The span at 222-232 (GSDSPPRTSTS) shows a compositional bias: low complexity. SH3 domains are found at residues 286 to 345 (LQMN…RVEE) and 348 to 403 (KIYR…LVDV).

Interacts (via SH3 domains) with CACNA1S. Interacts with CACNA1H. Interacts with CACNA1C. Expressed predominantly in brain Detected in brain neurons, more specifically in hippocampus, cerebellum and inferior olive. Highly expressed in urinary bladder, and detected at lower levels in adrenal gland. Detected at very low levels in heart, liver, lung and kidney.

It localises to the cytoplasm. The protein localises to the cytosol. Its subcellular location is the cell membrane. It is found in the sarcolemma. Its function is as follows. Promotes expression of the ion channel CACNA1H at the cell membrane, and thereby contributes to the regulation of channel activity. Plays a minor and redundant role in promoting the expression of calcium channel CACNA1S at the cell membrane, and thereby contributes to increased channel activity. Slows the rate of calcium-mediated inactivation of CACNA1C calcium channel activity. The sequence is that of SH3 and cysteine-rich domain-containing protein from Mus musculus (Mouse).